The chain runs to 109 residues: Small ribosomal subunit protein uS10c (109 aa).

The protein belongs to the universal ribosomal protein uS10 family. In terms of assembly, part of the 30S ribosomal subunit.

It localises to the plastid. The protein localises to the chloroplast. In terms of biological role, involved in the binding of tRNA to the ribosomes. The sequence is that of Small ribosomal subunit protein uS10c from Cyanidium caldarium (Red alga).